An 81-amino-acid chain; its full sequence is Adipogenin (81 aa).

Residues 16–36 traverse the membrane as a helical segment; it reads FLVFWLCLPVALLLFLLIIWL.

It belongs to the adipogenin family. As to expression, highly expressed in subcutaneous, perirenal and mesecentric adipose tissue.

It localises to the membrane. The protein resides in the nucleus. Functionally, plays a role in stimulating adipocyte differentiation and development. This chain is Adipogenin, found in Bos taurus (Bovine).